The chain runs to 721 residues: Far upstream element-binding protein 2 (721 aa).

The disordered stretch occupies residues M1–E148. An N-acetylserine modification is found at S2. Over residues G8–A17 the composition is skewed to pro residues. 2 stretches are compositionally biased toward gly residues: residues G18–G28 and G36–G69. Residue R40 is modified to Omega-N-methylarginine. An N6-acetyllysine modification is found at K88. T101 bears the Phosphothreonine mark. Residues R111–K123 are compositionally biased toward basic and acidic residues. Residue K122 forms a Glycyl lysine isopeptide (Lys-Gly) (interchain with G-Cter in SUMO1); alternate linkage. Residue K122 forms a Glycyl lysine isopeptide (Lys-Gly) (interchain with G-Cter in SUMO2); alternate linkage. S126, S130, S182, S185, S194, and S275 each carry phosphoserine. KH domains follow at residues S145–L209, G234–V300, and G323–I387. The interval L394 to G422 is disordered. The span at P398–P408 shows a compositional bias: pro residues. Residues P409 to G422 show a composition bias toward gly residues. Residues R412, R414, R416, and R443 each carry the omega-N-methylarginine modification. The KH 4 domain occupies G425 to I492. At S481 the chain carries Phosphoserine. Residues G498–A570 are disordered. 2 stretches are compositionally biased toward pro residues: residues P502 to P521 and P529 to Y543. The stretch at D572–H583 is repeat 1. A 4 X 12 AA imperfect repeats region spans residues D572–Q685. Over residues P588–T614 the composition is skewed to pro residues. Disordered regions lie at residues P588 to E650, V659 to A678, and A688 to L721. A run of 3 repeats spans residues D618–K629, D644–K655, and D674–Q685.

The protein belongs to the KHSRP family. As to quaternary structure, part of a ternary complex containing FUBP2, PTBP1, PTBP2 and HNRPH1. Interacts with PARN. Interacts with PQBP1.

The protein localises to the nucleus. The protein resides in the cytoplasm. Its function is as follows. Part of a ternary complex that binds to the downstream control sequence (DCS) of the pre-mRNA. Mediates exon inclusion in transcripts that are subject to tissue-specific alternative splicing. May interact with single-stranded DNA from the far-upstream element (FUSE). May activate gene expression. Also involved in degradation of inherently unstable mRNAs that contain AU-rich elements (AREs) in their 3'-UTR, possibly by recruiting degradation machinery to ARE-containing mRNAs. Binds to the dendritic targeting element and may play a role in mRNA trafficking. This is Far upstream element-binding protein 2 (Khsrp) from Rattus norvegicus (Rat).